The sequence spans 1343 residues: DNA-directed RNA polymerase subunit beta (1343 aa).

This sequence belongs to the RNA polymerase beta chain family. The RNAP catalytic core consists of 2 alpha, 1 beta, 1 beta' and 1 omega subunit. When a sigma factor is associated with the core the holoenzyme is formed, which can initiate transcription.

The enzyme catalyses RNA(n) + a ribonucleoside 5'-triphosphate = RNA(n+1) + diphosphate. DNA-dependent RNA polymerase catalyzes the transcription of DNA into RNA using the four ribonucleoside triphosphates as substrates. The sequence is that of DNA-directed RNA polymerase subunit beta from Buchnera aphidicola subsp. Cinara cedri (strain Cc).